The following is a 1319-amino-acid chain: E3 ubiquitin-protein ligase NEDD4 (1319 aa).

N-acetylalanine is present on alanine 2. The tract at residues 204–229 (GNLPSDSTSNRSVPNRNTTPCEIFSR) is disordered. A compositionally biased stretch (polar residues) spans 207–229 (PSDSTSNRSVPNRNTTPCEIFSR). The residue at position 576 (serine 576) is a Phosphoserine. Residues 578–981 (DDNAEQAEEL…LEDSYRRIMG (404 aa)) form a mediates interaction with TNIK region. Residues 610–643 (SPLPPGWEERQDILGRTYYVNHESRRTQWKRPTP) enclose the WW 1 domain. Threonine 648 carries the phosphothreonine modification. Serine 670 is subject to Phosphoserine. Residues 716 to 726 (LAEELNARLTI) carry the Nuclear export signal motif. Residues serine 742 and serine 747 each carry the phosphoserine modification. 2 disordered regions span residues 755-780 (EQPT…QDER) and 796-834 (TKPT…VTQP). The WW 2 domain maps to 767 to 800 (SGLPPGWEEKQDERGRSYYVDHNSRTTTWTKPTV). The span at 796–809 (TKPTVQATVETSQL) shows a compositional bias: polar residues. Low complexity predominate over residues 810–825 (TSSQSSAGPQSQASTS). WW domains are found at residues 840–873 (GFLP…DPRL) and 892–925 (GPLP…DPRL). The 335-residue stretch at 984–1318 (RADFLKARLW…IENTQGFDGV (335 aa)) folds into the HECT domain. Lysine 1279 is covalently cross-linked (Glycyl lysine isopeptide (Lys-Gly) (interchain with G-Cter in ubiquitin)). The active-site Glycyl thioester intermediate is the cysteine 1286.

In terms of assembly, binds, in vitro, through the WW2 and WW3 domains, to neural isoforms of ENAH that contain the PPSY motif. Interacts with BEAN1, LITAF, RNF11, WBP1, WBP2, PMEPAI and PRRG2. Interacts with NDFIP1 and NDFIP2; this interaction activates the E3 ubiquitin-protein ligase and may induce its recruitment to exosomes. Interacts with UBE2D2. Interaction with PTEN is questionable according to PubMed:18562292. Interacts (via C2 domain) with GRB10 (via SH2 domain). Interacts with ERBB4. Interacts with TNIK; the interaction is direct, allows the TNIK-dependent recruitment of RAP2A and its ubiquitination by NEDD4. Interacts (via WW3 domain) with TNK2; EGF promotes this interaction. Interacts (via WW3 domain) with FGFR1 (via C-terminus). Interacts with OTUD7B. Interacts with ISG15. Interacts (via WW domain) with RAPGEF2; this interaction leads to ubiquitination and degradation via the proteasome pathway. Interacts (via WW domains) with ARRDC3 (via PPXY motifs). Interacts with LAPTM4B; may play a role in the lysosomal sorting of LAPTM4B. Interacts (via WW domains) with ARRDC1, ARRDC2 and ARRDC3. Interacts with ZBTB7B. Interacts with PRRG4 (via cytoplasmic domain). Interacts directly with LDLRAD3; this interaction promotes NEDD4 auto-ubiquitination. Interacts with ADRB2. Interacts (via WW domains) with DAZAP2 (via PPAY motif). Interacts with USP13. As to quaternary structure, (Microbial infection) Interacts with viral proteins that contain a late-budding motif P-P-P-Y. This interaction is essential for viral particle budding of many retroviruses, like HTLV-1 Gag and MLV Gag. Interacts with Herpes simplex virus 2 (HHV-2) protein UL56; this interaction induces NEDD4 degradation. Interacts with Ebola virus protein VP40. In terms of processing, undergoes 'Lys-29'-linked auto-ubiquitination at Lys-1279 and serves as a scaffold for recruiting USP13 to form an NEDD4-USP13 deubiquitination complex.

Its subcellular location is the cytoplasm. The protein localises to the nucleus. It localises to the cell membrane. The enzyme catalyses S-ubiquitinyl-[E2 ubiquitin-conjugating enzyme]-L-cysteine + [acceptor protein]-L-lysine = [E2 ubiquitin-conjugating enzyme]-L-cysteine + N(6)-ubiquitinyl-[acceptor protein]-L-lysine.. It participates in protein modification; protein ubiquitination. With respect to regulation, activated by NDFIP1- and NDFIP2-binding. Functionally, E3 ubiquitin-protein ligase which accepts ubiquitin from an E2 ubiquitin-conjugating enzyme in the form of a thioester and then directly transfers the ubiquitin to targeted substrates. Specifically ubiquitinates 'Lys-63' in target proteins. Involved in the pathway leading to the degradation of VEGFR-2/KDFR, independently of its ubiquitin-ligase activity. Monoubiquitinates IGF1R at multiple sites, thus leading to receptor internalization and degradation in lysosomes. Ubiquitinates FGFR1, leading to receptor internalization and degradation in lysosomes. Promotes ubiquitination of RAPGEF2. According to PubMed:18562292 the direct link between NEDD4 and PTEN regulation through polyubiquitination described in PubMed:17218260 is questionable. Involved in ubiquitination of ERBB4 intracellular domain E4ICD. Part of a signaling complex composed of NEDD4, RAP2A and TNIK which regulates neuronal dendrite extension and arborization during development. Ubiquitinates TNK2 and regulates EGF-induced degradation of EGFR and TNF2. Ubiquitinates BRAT1 and this ubiquitination is enhanced in the presence of NDFIP1. Ubiquitinates DAZAP2, leading to its proteasomal degradation. Ubiquitinates POLR2A. Functions as a platform to recruit USP13 to form an NEDD4-USP13 deubiquitination complex that plays a critical role in cleaving the 'Lys-48'-linked ubiquitin chains of VPS34 and then stabilizing VPS34, thus promoting the formation of autophagosomes. In terms of biological role, (Microbial infection) Involved in the ubiquitination of Ebola virus protein VP40 which plays a role in viral budding. The protein is E3 ubiquitin-protein ligase NEDD4 (NEDD4) of Homo sapiens (Human).